Consider the following 424-residue polypeptide: Histidine--tRNA ligase (424 aa).

Belongs to the class-II aminoacyl-tRNA synthetase family. In terms of assembly, homodimer.

The protein localises to the cytoplasm. It carries out the reaction tRNA(His) + L-histidine + ATP = L-histidyl-tRNA(His) + AMP + diphosphate + H(+). In Salmonella dublin (strain CT_02021853), this protein is Histidine--tRNA ligase.